We begin with the raw amino-acid sequence, 109 residues long: Protein AC78 (109 aa).

A helical transmembrane segment spans residues 61-81 (GIIILISVVAFIALFLLLYVI).

The protein localises to the host membrane. It is found in the virion. Plays an essential role in budded virus production and occlusion body formation. The protein is Protein AC78 (AC78) of Autographa californica nuclear polyhedrosis virus (AcMNPV).